A 378-amino-acid chain; its full sequence is Putative odorant receptor 71a (378 aa).

Residues 1 to 37 (MDYDRIRPVRFLTGVLKWWRLWPRKESVSTPDWTNWQ) lie on the Cytoplasmic side of the membrane. A helical membrane pass occupies residues 38–58 (AYALHVPFTFLFVLLLWLEAI). Over 59–66 (KSRDIQHT) the chain is Extracellular. A helical transmembrane segment spans residues 67–87 (ADVLLICLTTTALGGKVINIW). The Cytoplasmic segment spans residues 88-127 (KYAHVAQGILSEWSTWDLFELRSKQEVDMWRFEHRRFNRV). Residues 128-148 (FMFYCLCSAGVIPFIVIQPLF) form a helical membrane-spanning segment. At 149–166 (DIPNRLPFWMWTPFDWQQ) the chain is on the extracellular side. Residues 167–187 (PVLFWYAFIYQATTIPIACAC) traverse the membrane as a helical segment. Over 188–255 (NVTMDAVNWY…IFISKSTFTQ (68 aa)) the chain is Cytoplasmic. Residues 256–276 (ILVSSLIICFTIYSMQMSPVL) traverse the membrane as a helical segment. Topologically, residues 277-280 (QDLP) are extracellular. Residues 281 to 301 (GFAAMMQYLVAMIMQVMLPTI) form a helical membrane-spanning segment. Residues 302 to 343 (YGNAVIDSANMLTDSMYNSDWPDMNCRMRRLVLMFMVYLNRP) are Cytoplasmic-facing. The helical transmembrane segment at 344–364 (VTLKAGGFFHIGLPLFTKTMN) threads the bilayer. Topologically, residues 365–378 (QAYSLLALLLNMNQ) are extracellular.

It belongs to the insect chemoreceptor superfamily. Heteromeric odorant receptor channel (TC 1.A.69) family. Or2a subfamily. Interacts with Orco. Complexes exist early in the endomembrane system in olfactory sensory neurons (OSNs), coupling these complexes to the conserved ciliary trafficking pathway. As to expression, expressed in olfactory sensory neurons in the maxillary palp.

The protein localises to the cell membrane. Functionally, odorant receptor which mediates acceptance or avoidance behavior, depending on its substrates. The odorant receptor repertoire encodes a large collection of odor stimuli that vary widely in identity, intensity, and duration. May form a complex with Orco to form odorant-sensing units, providing sensitive and prolonged odorant signaling and calcium permeability. This is Putative odorant receptor 71a (Or71a) from Drosophila melanogaster (Fruit fly).